The chain runs to 624 residues: Chaperone protein HtpG (624 aa).

Positions 1 to 336 (MKGQETRGFQ…SNDLPLNVSR (336 aa)) are a; substrate-binding. The b stretch occupies residues 337–552 (EILQDSSITR…NDEMSTQMAK (216 aa)). Residues 553 to 624 (LFAAAGQAVP…IRRMNQLLVS (72 aa)) form a c region.

The protein belongs to the heat shock protein 90 family. In terms of assembly, homodimer.

Its subcellular location is the cytoplasm. In terms of biological role, molecular chaperone. Has ATPase activity. The protein is Chaperone protein HtpG of Cronobacter sakazakii (strain ATCC BAA-894) (Enterobacter sakazakii).